We begin with the raw amino-acid sequence, 1061 residues long: Ribonuclease 3 (1061 aa).

Disordered stretches follow at residues 1–20 (MDFT…QIHQ) and 149–244 (PLHS…SYNE). Over residues 156 to 173 (KTPERKENEEDSDSEIRS) the composition is skewed to basic and acidic residues. RNase III domains lie at 586 to 759 (LSVF…LDSG) and 811 to 935 (FHRL…VDKG). The Mg(2+) site is built by glutamate 851, aspartate 921, and glutamate 924. The region spanning 962 to 1037 (DAKSHLQQWC…AENALAALEK (76 aa)) is the DRBM domain.

The protein belongs to the ribonuclease III family. Mg(2+) is required as a cofactor. Mn(2+) serves as cofactor.

It localises to the nucleus. The catalysed reaction is Endonucleolytic cleavage to 5'-phosphomonoester.. Functionally, executes the initial step of microRNA (miRNA) processing in the nucleus, that is the cleavage of pri-miRNA to release pre-miRNA. Involved in pre-rRNA processing. Cleaves double-strand RNA and does not cleave single-strand RNA. Involved in fertility. Required for the function or synthesis of the let-7 miRNA. This chain is Ribonuclease 3, found in Caenorhabditis briggsae.